Consider the following 213-residue polypeptide: MQAYQRDFIRFAIDRGVLRFGEFTLKSGRTSPYFFNAGLFNTGSALAQLGRFYAAAVVESGIAFDVLFGPAYKGIPLASATAVALAEHHDRDLPWCFNRKEAKAHGEGGSLVGSPLAGNVLIIDDVITAGTAIREVMQIIKDQSATAAGVLIALNRQERGNGELSAIQEVERDFGIPVVSIVSLNQVLEFLADDPQLKQHLPAVEAYRMQYGI.

K26 provides a ligand contact to 5-phospho-alpha-D-ribose 1-diphosphate. 34–35 (FF) provides a ligand contact to orotate. 5-phospho-alpha-D-ribose 1-diphosphate contacts are provided by residues 72 to 73 (YK), R99, K100, K103, H105, and 124 to 132 (DDVITAGTA). T128 and R156 together coordinate orotate.

This sequence belongs to the purine/pyrimidine phosphoribosyltransferase family. PyrE subfamily. In terms of assembly, homodimer. Mg(2+) is required as a cofactor.

It carries out the reaction orotidine 5'-phosphate + diphosphate = orotate + 5-phospho-alpha-D-ribose 1-diphosphate. Its pathway is pyrimidine metabolism; UMP biosynthesis via de novo pathway; UMP from orotate: step 1/2. In terms of biological role, catalyzes the transfer of a ribosyl phosphate group from 5-phosphoribose 1-diphosphate to orotate, leading to the formation of orotidine monophosphate (OMP). The polypeptide is Orotate phosphoribosyltransferase (Pseudomonas savastanoi pv. phaseolicola (strain 1448A / Race 6) (Pseudomonas syringae pv. phaseolicola (strain 1448A / Race 6))).